The chain runs to 149 residues: Sex-regulated protein janus-A (149 aa).

Lys46 provides a ligand contact to substrate. His77 (proton acceptor) is an active-site residue. A substrate-binding site is contributed by 118–120 (STG).

This sequence belongs to the janus family.

In terms of biological role, janA and janB regulate somatic sex differentiation. This Drosophila pseudoobscura pseudoobscura (Fruit fly) protein is Sex-regulated protein janus-A (janA).